Consider the following 229-residue polypeptide: 2-phytyl-1,4-naphtoquinone methyltransferase (229 aa).

Belongs to the class I-like SAM-binding methyltransferase superfamily. MenG/UbiE family.

It catalyses the reaction demethylphylloquinol + S-adenosyl-L-methionine = phylloquinol + S-adenosyl-L-homocysteine + H(+). It functions in the pathway cofactor biosynthesis; phylloquinone biosynthesis. In terms of biological role, methyltransferase required for the conversion of 2-phytyl-1,4-beta-naphthoquinol to phylloquinol. The chain is 2-phytyl-1,4-naphtoquinone methyltransferase from Nostoc sp. (strain PCC 7120 / SAG 25.82 / UTEX 2576).